The following is a 210-amino-acid chain: Regulatory protein RecX (210 aa).

The tract at residues 28 to 47 (SRRQEEGAASSLFDREAEEK) is disordered.

It belongs to the RecX family.

It localises to the cytoplasm. In terms of biological role, modulates RecA activity. This is Regulatory protein RecX from Corynebacterium efficiens (strain DSM 44549 / YS-314 / AJ 12310 / JCM 11189 / NBRC 100395).